Reading from the N-terminus, the 417-residue chain is Phosphoglycerate kinase (417 aa).

Residues V23, D24, F25, N26, Q38, R39, S62, H63, G65, R66, L121, R122, H169, and R170 each coordinate (2R)-3-phosphoglycerate. Residue G213 coordinates ADP. G213 provides a ligand contact to CDP. Positions 214 and 215 each coordinate AMP. A214 is an ATP binding site. Mg(2+) is bound at residue A214. D218 serves as a coordination point for CDP. D218 contacts Mg(2+). Residue K219 participates in AMP binding. Residue K219 coordinates ATP. ADP is bound at residue G237. G237 serves as a coordination point for CDP. AMP is bound by residues G238 and G312. ATP contacts are provided by G238 and G312. CDP contacts are provided by G337 and F342. ADP is bound at residue F342. E343 is a binding site for AMP. Positions 343, 374, and 375 each coordinate ATP. D374 contacts Mg(2+).

It belongs to the phosphoglycerate kinase family. As to quaternary structure, monomer. It depends on Mg(2+) as a cofactor.

Its subcellular location is the cytoplasm. The protein localises to the mitochondrion. It catalyses the reaction (2R)-3-phosphoglycerate + ATP = (2R)-3-phospho-glyceroyl phosphate + ADP. Its pathway is carbohydrate degradation; glycolysis; pyruvate from D-glyceraldehyde 3-phosphate: step 2/5. Functionally, catalyzes one of the two ATP producing reactions in the glycolytic pathway via the reversible conversion of 1,3-diphosphoglycerate to 3-phosphoglycerate. Both L- and D- forms of purine and pyrimidine nucleotides can be used as substrates, but the activity is much lower on pyrimidines. Negatively regulates the biosynthesis of acetyl-CoA from pyruvate in the mitochondrion. The polypeptide is Phosphoglycerate kinase (PGK1) (Candida maltosa (Yeast)).